The primary structure comprises 809 residues: MAYEASLIEKKWQKIWDENEYFEPKDDLNLPKKYILSMFPYPSGRIHMGHVRNYTIGDVLARYYRKIGFNVLHPIGFDSFGMPAENAAIKHKIHPKSWTYENIAYMKKELFSLGFSFSKKRMLATSDPLYTKFEQEFFIKMFEKGLIYTKEANVNWCEQDQTVLANEQVEDGKCWRCGHEVVQKKMPGYYVKITAYAEELLKDLEELKDKWPNQVLTMQENWIGKSEGLEFSLNLDEESKQKTKESSLEVFTTRADTIYGVSYIALAPEHKIVQNLLSQNLLNQDVLNKIKVIQNQSPRERQSSEKEGYFLGIYAIHPLSGEKIPLWVANFVLADYGSGAVMAVPAHDERDFEFATKYNLAIKQVIQTQENLPYTQKSGKLIHSQEFDNLDCNEARLKIISQFEAKNIGKRVVNFKIRDWGVSRQRYWGAPIPMIKCQICGIVPQKLENLPITLPEDVQITGEGNPLDKHPTWKNCICPKCGKEAQKESDTLDTFFESSWYFARFASDEKTWQEKALDEKSVKYWMSVDQYIGGIEHAILHLLYARFFQKALRDLGYLTQNEPFDRLLTQGMVLKDGAKMSKSKGNVVDPDEIIEKYGADTARLFILFAAPPAKELEWNDDAVEGAYRFICKLYDRAQNVKKGELVELKQENLNKEEKYARLKVYEALKKSFEVYHQSFAFNTLIAACMEALNALALCKNEALEQEAFYIILNILEPIIPHVCFELSEELFKCKNFKKLELKEEVFVKDTLNLAVSINGKKRAEFEISSSASKEEILAFAKENTAKWLEGKSIVKEIYVEGKLVNLVIK.

The 'HIGH' region signature appears at 40–50 (PYPSGRIHMGH). The 'KMSKS' region motif lies at 579-583 (KMSKS). Position 582 (lysine 582) interacts with ATP.

Belongs to the class-I aminoacyl-tRNA synthetase family.

The protein resides in the cytoplasm. It catalyses the reaction tRNA(Leu) + L-leucine + ATP = L-leucyl-tRNA(Leu) + AMP + diphosphate. The protein is Leucine--tRNA ligase of Campylobacter jejuni (strain RM1221).